Consider the following 264-residue polypeptide: Hydroxyethylthiazole kinase (264 aa).

Met45 serves as a coordination point for substrate. ATP contacts are provided by Arg121 and Ser167. Gly194 provides a ligand contact to substrate.

The protein belongs to the Thz kinase family. Mg(2+) is required as a cofactor.

It carries out the reaction 5-(2-hydroxyethyl)-4-methylthiazole + ATP = 4-methyl-5-(2-phosphooxyethyl)-thiazole + ADP + H(+). It functions in the pathway cofactor biosynthesis; thiamine diphosphate biosynthesis; 4-methyl-5-(2-phosphoethyl)-thiazole from 5-(2-hydroxyethyl)-4-methylthiazole: step 1/1. Catalyzes the phosphorylation of the hydroxyl group of 4-methyl-5-beta-hydroxyethylthiazole (THZ). This is Hydroxyethylthiazole kinase from Aliivibrio salmonicida (strain LFI1238) (Vibrio salmonicida (strain LFI1238)).